The sequence spans 197 residues: dTTP/UTP pyrophosphatase (197 aa).

Asp-70 acts as the Proton acceptor in catalysis.

It belongs to the Maf family. YhdE subfamily. It depends on a divalent metal cation as a cofactor.

The protein resides in the cytoplasm. The enzyme catalyses dTTP + H2O = dTMP + diphosphate + H(+). The catalysed reaction is UTP + H2O = UMP + diphosphate + H(+). Nucleoside triphosphate pyrophosphatase that hydrolyzes dTTP and UTP. May have a dual role in cell division arrest and in preventing the incorporation of modified nucleotides into cellular nucleic acids. This chain is dTTP/UTP pyrophosphatase, found in Pectobacterium atrosepticum (strain SCRI 1043 / ATCC BAA-672) (Erwinia carotovora subsp. atroseptica).